Here is a 138-residue protein sequence, read N- to C-terminus: Sec-independent protein translocase protein TatB (138 aa).

A helical membrane pass occupies residues 1–21 (MFDIGATELLVIAIVAILVIG). Positions 74-138 (MAKHPADQMQ…EPRLPLEGRD (65 aa)) are disordered. Residues 83-97 (QPLDAPDPALSAAEA) show a composition bias toward low complexity. The segment covering 98–138 (RAAHTEAAKPARAAEETQADRASADEHPAASEPRLPLEGRD) has biased composition (basic and acidic residues).

It belongs to the TatB family. In terms of assembly, the Tat system comprises two distinct complexes: a TatABC complex, containing multiple copies of TatA, TatB and TatC subunits, and a separate TatA complex, containing only TatA subunits. Substrates initially bind to the TatABC complex, which probably triggers association of the separate TatA complex to form the active translocon.

Its subcellular location is the cell inner membrane. Functionally, part of the twin-arginine translocation (Tat) system that transports large folded proteins containing a characteristic twin-arginine motif in their signal peptide across membranes. Together with TatC, TatB is part of a receptor directly interacting with Tat signal peptides. TatB may form an oligomeric binding site that transiently accommodates folded Tat precursor proteins before their translocation. The protein is Sec-independent protein translocase protein TatB of Erythrobacter litoralis (strain HTCC2594).